We begin with the raw amino-acid sequence, 333 residues long: Lipoyl synthase (333 aa).

7 residues coordinate [4Fe-4S] cluster: cysteine 56, cysteine 61, cysteine 67, cysteine 82, cysteine 86, cysteine 89, and serine 293. Residues 68-282 (WEDREATFLI…GRVGAELGFS (215 aa)) form the Radical SAM core domain. Positions 301 to 333 (QQAMTARDQDRSEMSVPPESVSENSHGQRPSPW) are disordered. Low complexity predominate over residues 314–325 (MSVPPESVSENS).

Belongs to the radical SAM superfamily. Lipoyl synthase family. Requires [4Fe-4S] cluster as cofactor.

The protein localises to the cytoplasm. It carries out the reaction [[Fe-S] cluster scaffold protein carrying a second [4Fe-4S](2+) cluster] + N(6)-octanoyl-L-lysyl-[protein] + 2 oxidized [2Fe-2S]-[ferredoxin] + 2 S-adenosyl-L-methionine + 4 H(+) = [[Fe-S] cluster scaffold protein] + N(6)-[(R)-dihydrolipoyl]-L-lysyl-[protein] + 4 Fe(3+) + 2 hydrogen sulfide + 2 5'-deoxyadenosine + 2 L-methionine + 2 reduced [2Fe-2S]-[ferredoxin]. It participates in protein modification; protein lipoylation via endogenous pathway; protein N(6)-(lipoyl)lysine from octanoyl-[acyl-carrier-protein]: step 2/2. Its function is as follows. Catalyzes the radical-mediated insertion of two sulfur atoms into the C-6 and C-8 positions of the octanoyl moiety bound to the lipoyl domains of lipoate-dependent enzymes, thereby converting the octanoylated domains into lipoylated derivatives. This is Lipoyl synthase from Frankia casuarinae (strain DSM 45818 / CECT 9043 / HFP020203 / CcI3).